A 94-amino-acid polypeptide reads, in one-letter code: Small ribosomal subunit protein bS6 (94 aa).

It belongs to the bacterial ribosomal protein bS6 family.

Binds together with bS18 to 16S ribosomal RNA. The polypeptide is Small ribosomal subunit protein bS6 (Fusobacterium nucleatum subsp. nucleatum (strain ATCC 25586 / DSM 15643 / BCRC 10681 / CIP 101130 / JCM 8532 / KCTC 2640 / LMG 13131 / VPI 4355)).